A 778-amino-acid polypeptide reads, in one-letter code: Endonuclease MutS2 (778 aa).

An ATP-binding site is contributed by 328–335; the sequence is GPNTGGKT. Positions 702 to 777 constitute a Smr domain; that stretch reads LDLRGKRYEE…GSGATIVTFK (76 aa).

The protein belongs to the DNA mismatch repair MutS family. MutS2 subfamily. As to quaternary structure, homodimer. Binds to stalled ribosomes, contacting rRNA.

Functionally, endonuclease that is involved in the suppression of homologous recombination and thus may have a key role in the control of bacterial genetic diversity. In terms of biological role, acts as a ribosome collision sensor, splitting the ribosome into its 2 subunits. Detects stalled/collided 70S ribosomes which it binds and splits by an ATP-hydrolysis driven conformational change. Acts upstream of the ribosome quality control system (RQC), a ribosome-associated complex that mediates the extraction of incompletely synthesized nascent chains from stalled ribosomes and their subsequent degradation. Probably generates substrates for RQC. This is Endonuclease MutS2 from Streptococcus pneumoniae (strain ATCC 700669 / Spain 23F-1).